The chain runs to 691 residues: DNA ligase (691 aa).

NAD(+)-binding positions include 36–40 (DAEYD), 85–86 (SL), and E118. The active-site N6-AMP-lysine intermediate is the K120. Positions 141, 178, 295, and 319 each coordinate NAD(+). Zn(2+) contacts are provided by C413, C416, C431, and C437. A BRCT domain is found at 595–684 (GRPQPLAGQT…ESASSEDAQP (90 aa)).

This sequence belongs to the NAD-dependent DNA ligase family. LigA subfamily. Mg(2+) is required as a cofactor. Mn(2+) serves as cofactor.

It carries out the reaction NAD(+) + (deoxyribonucleotide)n-3'-hydroxyl + 5'-phospho-(deoxyribonucleotide)m = (deoxyribonucleotide)n+m + AMP + beta-nicotinamide D-nucleotide.. In terms of biological role, DNA ligase that catalyzes the formation of phosphodiester linkages between 5'-phosphoryl and 3'-hydroxyl groups in double-stranded DNA using NAD as a coenzyme and as the energy source for the reaction. It is essential for DNA replication and repair of damaged DNA. This Chromohalobacter salexigens (strain ATCC BAA-138 / DSM 3043 / CIP 106854 / NCIMB 13768 / 1H11) protein is DNA ligase.